Here is a 241-residue protein sequence, read N- to C-terminus: Triosephosphate isomerase (241 aa).

Residue Asn9–Lys11 coordinates substrate. The Electrophile role is filled by His88. Glu158 acts as the Proton acceptor in catalysis. Residues Gly164, Ser203, and Gly224–Gly225 contribute to the substrate site.

It belongs to the triosephosphate isomerase family. In terms of assembly, homodimer.

It is found in the cytoplasm. It catalyses the reaction D-glyceraldehyde 3-phosphate = dihydroxyacetone phosphate. It functions in the pathway carbohydrate biosynthesis; gluconeogenesis. The protein operates within carbohydrate degradation; glycolysis; D-glyceraldehyde 3-phosphate from glycerone phosphate: step 1/1. In terms of biological role, involved in the gluconeogenesis. Catalyzes stereospecifically the conversion of dihydroxyacetone phosphate (DHAP) to D-glyceraldehyde-3-phosphate (G3P). In Dichelobacter nodosus (strain VCS1703A), this protein is Triosephosphate isomerase.